Reading from the N-terminus, the 246-residue chain is 3-deoxy-manno-octulosonate cytidylyltransferase (246 aa).

It belongs to the KdsB family.

Its subcellular location is the cytoplasm. The enzyme catalyses 3-deoxy-alpha-D-manno-oct-2-ulosonate + CTP = CMP-3-deoxy-beta-D-manno-octulosonate + diphosphate. It functions in the pathway nucleotide-sugar biosynthesis; CMP-3-deoxy-D-manno-octulosonate biosynthesis; CMP-3-deoxy-D-manno-octulosonate from 3-deoxy-D-manno-octulosonate and CTP: step 1/1. Its pathway is bacterial outer membrane biogenesis; lipopolysaccharide biosynthesis. Its function is as follows. Activates KDO (a required 8-carbon sugar) for incorporation into bacterial lipopolysaccharide in Gram-negative bacteria. The protein is 3-deoxy-manno-octulosonate cytidylyltransferase of Paramagnetospirillum magneticum (strain ATCC 700264 / AMB-1) (Magnetospirillum magneticum).